A 160-amino-acid polypeptide reads, in one-letter code: Tic20 family protein (160 aa).

The next 4 helical transmembrane spans lie at 13–33 (FFSALIYVIPLIDAFMFGGFL), 53–73 (FYYQFPFASFIIFIVLFMAVV), 87–107 (MQAILIGILLSLFGLIVAYVI), and 122–142 (NFAFLGALACGFFGIVQSVLG).

It belongs to the Tic20 family.

It localises to the cell membrane. The protein is Tic20 family protein of Synechocystis sp. (strain ATCC 27184 / PCC 6803 / Kazusa).